A 398-amino-acid polypeptide reads, in one-letter code: S-adenosylmethionine synthase (398 aa).

H16 is an ATP binding site. D18 lines the Mg(2+) pocket. A K(+)-binding site is contributed by E51. Residues E64 and Q108 each coordinate L-methionine. Residues 108-118 are flexible loop; sequence QSADIAQGVDA. Residues 176–178, 242–243, D251, 257–258, A274, and K278 contribute to the ATP site; these read DSK, KF, and RK. Residue D251 participates in L-methionine binding. K282 serves as a coordination point for L-methionine.

This sequence belongs to the AdoMet synthase family. In terms of assembly, homotetramer; dimer of dimers. It depends on Mg(2+) as a cofactor. Requires K(+) as cofactor.

Its subcellular location is the cytoplasm. The enzyme catalyses L-methionine + ATP + H2O = S-adenosyl-L-methionine + phosphate + diphosphate. It functions in the pathway amino-acid biosynthesis; S-adenosyl-L-methionine biosynthesis; S-adenosyl-L-methionine from L-methionine: step 1/1. Functionally, catalyzes the formation of S-adenosylmethionine (AdoMet) from methionine and ATP. The overall synthetic reaction is composed of two sequential steps, AdoMet formation and the subsequent tripolyphosphate hydrolysis which occurs prior to release of AdoMet from the enzyme. This Bradyrhizobium diazoefficiens (strain JCM 10833 / BCRC 13528 / IAM 13628 / NBRC 14792 / USDA 110) protein is S-adenosylmethionine synthase.